The sequence spans 117 residues: Hydrogenase maturation factor HypA (117 aa).

Position 2 (His2) interacts with Ni(2+). Cys73, Cys76, Cys89, and Cys92 together coordinate Zn(2+).

Belongs to the HypA/HybF family.

Its function is as follows. Involved in the maturation of [NiFe] hydrogenases. Required for nickel insertion into the metal center of the hydrogenase. The polypeptide is Hydrogenase maturation factor HypA (Shewanella baltica (strain OS223)).